Here is a 223-residue protein sequence, read N- to C-terminus: Urease accessory protein UreF (223 aa).

This sequence belongs to the UreF family. UreD, UreF and UreG form a complex that acts as a GTP-hydrolysis-dependent molecular chaperone, activating the urease apoprotein by helping to assemble the nickel containing metallocenter of UreC. The UreE protein probably delivers the nickel.

The protein localises to the cytoplasm. Functionally, required for maturation of urease via the functional incorporation of the urease nickel metallocenter. The protein is Urease accessory protein UreF of Agrobacterium fabrum (strain C58 / ATCC 33970) (Agrobacterium tumefaciens (strain C58)).